The chain runs to 854 residues: Selenocysteine insertion sequence-binding protein 2 (854 aa).

Disordered stretches follow at residues 332 to 351, 356 to 394, 417 to 445, and 488 to 619; these read ADPKNVSIPSSEALSSDPSY, HIIHPTQKSKASQGSDLEQNEASRKNKKKKEKSTSKYEV, ERRDRIETPKFQSKQQPQDNFKNNVKKSQ, and ECAS…PNHT. 2 stretches are compositionally biased toward polar residues: residues 338–350 and 361–372; these read SIPSSEALSSDPS and TQKSKASQGSDL. Positions 380–387 match the Nuclear localization signal motif; the sequence is KNKKKKEK. The span at 426-445 shows a compositional bias: polar residues; it reads KFQSKQQPQDNFKNNVKKSQ. The segment covering 536 to 547 has biased composition (basic and acidic residues); it reads ILKERQERKQRL. Residues 548–559 show a composition bias toward polar residues; sequence QENAVSPAFTSD. Acidic residues predominate over residues 560–572; that stretch reads DTQDGESGGDDQF. The segment covering 593–611 has biased composition (basic and acidic residues); sequence VEDKSEEPPGTELQRDTEA. Residues 673 to 694 form an RNA-binding region; it reads LVLGLREVLKHLKLKKLKCVII. Positions 787–812 are disordered; sequence EPRPQAPPSLPTQGPSCPAEDGPPAL.

As to expression, expressed at high levels in testis.

It is found in the nucleus. Its subcellular location is the mitochondrion. Its function is as follows. mRNA-binding protein that binds to the SECIS (selenocysteine insertion sequence) element present in the 3'-UTR of mRNAs encoding selenoproteins and facilitates the incorporation of the rare amino acid selenocysteine. Insertion of selenocysteine at UGA codons is mediated by SECISBP2 and EEFSEC: SECISBP2 (1) specifically binds the SECIS sequence once the 80S ribosome encounters an in-frame UGA codon and (2) contacts the RPS27A/eS31 of the 40S ribosome before ribosome stalling. (3) GTP-bound EEFSEC then delivers selenocysteinyl-tRNA(Sec) to the 80S ribosome and adopts a preaccommodated state conformation. (4) After GTP hydrolysis, EEFSEC dissociates from the assembly, selenocysteinyl-tRNA(Sec) accommodates, and peptide bond synthesis and selenoprotein elongation occur. This chain is Selenocysteine insertion sequence-binding protein 2, found in Homo sapiens (Human).